The sequence spans 63 residues: Conotoxin Vi5.1b (63 aa).

Residues 1-22 (MLCVPVFIILFIIIPFAPTSES) form the signal peptide. The propeptide occupies 23 to 50 (QPKTKEEVAKASVHDNAERTLQRLWNQS). The residue at position 62 (proline 62) is a Proline amide.

It belongs to the conotoxin T superfamily. Contains 2 disulfide bonds that can be either 'C1-C3, C2-C4' or 'C1-C4, C2-C3', since these disulfide connectivities have been observed for conotoxins with cysteine framework V (for examples, see AC P0DQQ7 and AC P81755). In terms of tissue distribution, expressed by the venom duct.

Its subcellular location is the secreted. The chain is Conotoxin Vi5.1b from Conus virgo (Virgin cone).